The primary structure comprises 330 residues: Aspartate--ammonia ligase (330 aa).

The protein belongs to the class-II aminoacyl-tRNA synthetase family. AsnA subfamily.

Its subcellular location is the cytoplasm. It carries out the reaction L-aspartate + NH4(+) + ATP = L-asparagine + AMP + diphosphate + H(+). It functions in the pathway amino-acid biosynthesis; L-asparagine biosynthesis; L-asparagine from L-aspartate (ammonia route): step 1/1. In Serratia proteamaculans (strain 568), this protein is Aspartate--ammonia ligase.